Here is a 704-residue protein sequence, read N- to C-terminus: Ion-translocating oxidoreductase complex subunit C (704 aa).

4Fe-4S ferredoxin-type domains lie at 368–397 and 407–436; these read MGAPQEEKSCIRCSACADACPADLLPQQLY and KATAHHIADCIECGACAWVCPSNIPLVQYF. [4Fe-4S] cluster contacts are provided by Cys-377, Cys-380, Cys-383, Cys-387, Cys-416, Cys-419, Cys-422, and Cys-426. The interval 536 to 684 is disordered; sequence RAKQAAHPMA…PADPRKAAVA (149 aa). The segment covering 556-565 has biased composition (low complexity); it reads KAAVEAAIAR.

Belongs to the 4Fe4S bacterial-type ferredoxin family. RnfC subfamily. As to quaternary structure, the complex is composed of six subunits: RsxA, RsxB, RsxC, RsxD, RsxE and RsxG. Requires [4Fe-4S] cluster as cofactor.

It localises to the cell inner membrane. Its function is as follows. Part of a membrane-bound complex that couples electron transfer with translocation of ions across the membrane. Required to maintain the reduced state of SoxR. The protein is Ion-translocating oxidoreductase complex subunit C of Salmonella choleraesuis (strain SC-B67).